Reading from the N-terminus, the 329-residue chain is Acetyl-coenzyme A carboxylase carboxyl transferase subunit alpha (329 aa).

The region spanning 40-294 is the CoA carboxyltransferase C-terminal domain; sequence QLETLAARRR…KNALEKHLSE (255 aa).

The protein belongs to the AccA family. Acetyl-CoA carboxylase is a heterohexamer composed of biotin carboxyl carrier protein (AccB), biotin carboxylase (AccC) and two subunits each of ACCase subunit alpha (AccA) and ACCase subunit beta (AccD).

The protein resides in the cytoplasm. It catalyses the reaction N(6)-carboxybiotinyl-L-lysyl-[protein] + acetyl-CoA = N(6)-biotinyl-L-lysyl-[protein] + malonyl-CoA. Its pathway is lipid metabolism; malonyl-CoA biosynthesis; malonyl-CoA from acetyl-CoA: step 1/1. Functionally, component of the acetyl coenzyme A carboxylase (ACC) complex. First, biotin carboxylase catalyzes the carboxylation of biotin on its carrier protein (BCCP) and then the CO(2) group is transferred by the carboxyltransferase to acetyl-CoA to form malonyl-CoA. This is Acetyl-coenzyme A carboxylase carboxyl transferase subunit alpha from Prochlorococcus marinus (strain NATL2A).